We begin with the raw amino-acid sequence, 196 residues long: Glycerol-3-phosphate acyltransferase (196 aa).

The next 5 membrane-spanning stretches (helical) occupy residues 1–21, 53–73, 76–96, 115–135, and 141–161; these read MGFIIGFLLSVFGYLLGSILF, KYGALVFLLDAFKGFLIAILD, YIDPSSLWFGIVMVSPVIGHI, VVFGISPLLALKMFLVWAFVF, and VSLASITSVLVGYFLFLEGDF.

This sequence belongs to the PlsY family. Probably interacts with PlsX.

The protein resides in the cell inner membrane. The enzyme catalyses an acyl phosphate + sn-glycerol 3-phosphate = a 1-acyl-sn-glycero-3-phosphate + phosphate. It participates in lipid metabolism; phospholipid metabolism. In terms of biological role, catalyzes the transfer of an acyl group from acyl-phosphate (acyl-PO(4)) to glycerol-3-phosphate (G3P) to form lysophosphatidic acid (LPA). This enzyme utilizes acyl-phosphate as fatty acyl donor, but not acyl-CoA or acyl-ACP. The polypeptide is Glycerol-3-phosphate acyltransferase (Hydrogenobaculum sp. (strain Y04AAS1)).